Here is a 308-residue protein sequence, read N- to C-terminus: Flavonol synthase 3 (308 aa).

The region spanning 167-267 is the Fe2OG dioxygenase domain; sequence TIEYLMKINY…RISWPVFVES (101 aa). 175 to 177 provides a ligand contact to 2-oxoglutarate; the sequence is NYY. Residues histidine 192, aspartate 194, and histidine 248 each coordinate Fe cation. 258 to 260 is a 2-oxoglutarate binding site; that stretch reads RIS.

The protein belongs to the iron/ascorbate-dependent oxidoreductase family. Fe(2+) serves as cofactor. In terms of tissue distribution, widely expressed at low levels.

It carries out the reaction a (2R,3R)-dihydroflavonol + 2-oxoglutarate + O2 = a flavonol + succinate + CO2 + H2O. It participates in secondary metabolite biosynthesis; flavonoid biosynthesis. Functionally, catalyzes the formation of flavonols from dihydroflavonols. Possesses low activity in vitro towards dihydrokaempferol and dihydroquercetin producing kaempferol and quercitin, respectively. In Arabidopsis thaliana (Mouse-ear cress), this protein is Flavonol synthase 3.